Reading from the N-terminus, the 571-residue chain is Putative F-box protein At5g39460 (571 aa).

An F-box domain is found at 9–55 (ACLLLTLPEDVFAVISRFLSPSDICNLILCGKSLCALVDSEKTWLVQ).

This Arabidopsis thaliana (Mouse-ear cress) protein is Putative F-box protein At5g39460.